The chain runs to 266 residues: Regulatory protein RecX (266 aa).

Belongs to the RecX family.

The protein resides in the cytoplasm. Modulates RecA activity. This Leuconostoc citreum (strain KM20) protein is Regulatory protein RecX.